Reading from the N-terminus, the 429-residue chain is D-amino acid dehydrogenase (429 aa).

FAD is bound at residue 3–17 (VLILGSGVIGTTTAW).

This sequence belongs to the DadA oxidoreductase family. FAD serves as cofactor.

The enzyme catalyses a D-alpha-amino acid + A + H2O = a 2-oxocarboxylate + AH2 + NH4(+). It functions in the pathway amino-acid degradation; D-alanine degradation; NH(3) and pyruvate from D-alanine: step 1/1. Its function is as follows. Oxidative deamination of D-amino acids. The protein is D-amino acid dehydrogenase of Xanthomonas campestris pv. campestris (strain 8004).